The chain runs to 61 residues: Small ribosomal subunit protein uS14 (61 aa).

Zn(2+) is bound by residues Cys24, Cys27, Cys40, and Cys43.

The protein belongs to the universal ribosomal protein uS14 family. Zinc-binding uS14 subfamily. In terms of assembly, part of the 30S ribosomal subunit. Contacts proteins S3 and S10. Requires Zn(2+) as cofactor.

In terms of biological role, binds 16S rRNA, required for the assembly of 30S particles and may also be responsible for determining the conformation of the 16S rRNA at the A site. The protein is Small ribosomal subunit protein uS14 of Maridesulfovibrio salexigens (strain ATCC 14822 / DSM 2638 / NCIMB 8403 / VKM B-1763) (Desulfovibrio salexigens).